A 267-amino-acid polypeptide reads, in one-letter code: Membrane-spanning 4-domains subfamily A member 10 (267 aa).

At 1–56 the chain is on the cytoplasmic side; sequence MAGQAPTAVPGSVTGEVSRWQNLGPAQPAQKVAQPQNLVPDGHLEKALEGSDLLQK. The helical transmembrane segment at 57–77 threads the bilayer; that stretch reads LGGFHIAIAFAHLAFGGYLIS. Residues 78–83 lie on the Extracellular side of the membrane; the sequence is TVKNLH. Residues 84 to 104 traverse the membrane as a helical segment; the sequence is LVVLKCWYPLWGTVSFLVAGM. Over 105 to 118 the chain is Cytoplasmic; it reads AAMTTVTFPKTSLK. The chain crosses the membrane as a helical span at residues 119–139; the sequence is VLCVIANVISLFCALAGFFVI. Topologically, residues 140–168 are extracellular; sequence AKDLFLEGPFPWPIWRPYPEPTTYIQRLE. The chain crosses the membrane as a helical span at residues 169–189; the sequence is LTLFCFTFLEIFLSGSTAITA. Residues 190–267 lie on the Cytoplasmic side of the membrane; sequence YRMKRLQAED…LHTGPRTLRK (78 aa).

The protein belongs to the MS4A family. Expressed in thymus, kidney, colon, brain and testis. Expressed also by various hematopoietic and lymphoblastoid cell lines.

It localises to the membrane. In terms of biological role, may be involved in signal transduction as a component of a multimeric receptor complex. The protein is Membrane-spanning 4-domains subfamily A member 10 (Ms4a10) of Mus musculus (Mouse).